We begin with the raw amino-acid sequence, 107 residues long: Putative double-stranded DNA mimic protein YE2228 (107 aa).

Belongs to the putative dsDNA mimic protein family.

Its function is as follows. May act as a double-stranded DNA (dsDNA) mimic. Probably regulates the activity of a dsDNA-binding protein. This is Putative double-stranded DNA mimic protein YE2228 from Yersinia enterocolitica serotype O:8 / biotype 1B (strain NCTC 13174 / 8081).